We begin with the raw amino-acid sequence, 142 residues long: Putative pre-16S rRNA nuclease (142 aa).

It belongs to the YqgF nuclease family.

The protein resides in the cytoplasm. In terms of biological role, could be a nuclease involved in processing of the 5'-end of pre-16S rRNA. This chain is Putative pre-16S rRNA nuclease, found in Photobacterium profundum (strain SS9).